Consider the following 316-residue polypeptide: Ribosomal RNA small subunit methyltransferase H (316 aa).

S-adenosyl-L-methionine contacts are provided by residues 35–37 (AGH), Asp55, Phe84, Asp105, and Gln112.

The protein belongs to the methyltransferase superfamily. RsmH family.

The protein resides in the cytoplasm. It carries out the reaction cytidine(1402) in 16S rRNA + S-adenosyl-L-methionine = N(4)-methylcytidine(1402) in 16S rRNA + S-adenosyl-L-homocysteine + H(+). In terms of biological role, specifically methylates the N4 position of cytidine in position 1402 (C1402) of 16S rRNA. The polypeptide is Ribosomal RNA small subunit methyltransferase H (Streptococcus gordonii (strain Challis / ATCC 35105 / BCRC 15272 / CH1 / DL1 / V288)).